A 408-amino-acid polypeptide reads, in one-letter code: Endo-1,4-beta-xylanase A (408 aa).

Positions 1–19 are cleaved as a signal peptide; the sequence is MKLSASFAALALLLPFVQA. Residues 20–55 form the CBM1 domain; that stretch reads QSPVWGQCGGIGWTGPTTCTAGNVCQEYSAYYSQCI. Residues 64–89 are disordered; that stretch reads TSVSTAPNPPPTSHTSTSSAPSGAST. The span at 76-89 shows a compositional bias: low complexity; it reads SHTSTSSAPSGAST. The region spanning 88–405 is the GH10 domain; sequence STSTAKLNTL…KPAYDGIAIG (318 aa). The Proton donor role is filled by glutamate 222. Catalysis depends on glutamate 327, which acts as the Nucleophile. A disulfide bridge links cysteine 355 with cysteine 361.

The protein belongs to the glycosyl hydrolase 10 (cellulase F) family.

The protein localises to the secreted. The catalysed reaction is Endohydrolysis of (1-&gt;4)-beta-D-xylosidic linkages in xylans.. The protein operates within glycan degradation; xylan degradation. In terms of biological role, endo-1,4-beta-xylanase involved in the hydrolysis of xylan, a major structural heterogeneous polysaccharide found in plant biomass representing the second most abundant polysaccharide in the biosphere, after cellulose. This is Endo-1,4-beta-xylanase A (xynA) from Phanerodontia chrysosporium (White-rot fungus).